Consider the following 396-residue polypeptide: Elongation factor Tu (396 aa).

Residues 11–205 (KPHVNIGTIG…TIDEYIPTPV (195 aa)) enclose the tr-type G domain. Residues 20–27 (GHVDHGKT) are G1. 20–27 (GHVDHGKT) contributes to the GTP binding site. Threonine 27 lines the Mg(2+) pocket. The G2 stretch occupies residues 61 to 65 (GITIN). The tract at residues 82-85 (DAPG) is G3. GTP-binding positions include 82-86 (DAPGH) and 137-140 (NKTD). The segment at 137–140 (NKTD) is G4. Residues 175–177 (SAL) form a G5 region.

This sequence belongs to the TRAFAC class translation factor GTPase superfamily. Classic translation factor GTPase family. EF-Tu/EF-1A subfamily. In terms of assembly, monomer.

It is found in the cytoplasm. The enzyme catalyses GTP + H2O = GDP + phosphate + H(+). GTP hydrolase that promotes the GTP-dependent binding of aminoacyl-tRNA to the A-site of ribosomes during protein biosynthesis. The sequence is that of Elongation factor Tu from Lacticaseibacillus casei (strain BL23) (Lactobacillus casei).